The chain runs to 148 residues: 3-dehydroquinate dehydratase (148 aa).

The active-site Proton acceptor is the Tyr-23. Substrate is bound by residues Asn-74, His-80, and Asp-87. His-100 acts as the Proton donor in catalysis. Substrate contacts are provided by residues 101 to 102 (IS) and Arg-111.

It belongs to the type-II 3-dehydroquinase family. As to quaternary structure, homododecamer.

The enzyme catalyses 3-dehydroquinate = 3-dehydroshikimate + H2O. The protein operates within metabolic intermediate biosynthesis; chorismate biosynthesis; chorismate from D-erythrose 4-phosphate and phosphoenolpyruvate: step 3/7. Its function is as follows. Catalyzes a trans-dehydration via an enolate intermediate. This is 3-dehydroquinate dehydratase from Halothermothrix orenii (strain H 168 / OCM 544 / DSM 9562).